The primary structure comprises 396 residues: S-adenosylmethionine synthase (396 aa).

His16 is a binding site for ATP. Residue Asp18 coordinates Mg(2+). Glu44 contributes to the K(+) binding site. L-methionine is bound by residues Glu57 and Gln100. Residues 100–110 (QSQDIARGVDN) form a flexible loop region. ATP-binding positions include 162–164 (DGK), 228–229 (RF), Asp237, 243–244 (RK), Ala260, and Lys264. Asp237 lines the L-methionine pocket. Residue Lys268 participates in L-methionine binding.

Belongs to the AdoMet synthase family. Homotetramer; dimer of dimers. The cofactor is Mg(2+). It depends on K(+) as a cofactor.

The protein resides in the cytoplasm. The catalysed reaction is L-methionine + ATP + H2O = S-adenosyl-L-methionine + phosphate + diphosphate. Its pathway is amino-acid biosynthesis; S-adenosyl-L-methionine biosynthesis; S-adenosyl-L-methionine from L-methionine: step 1/1. Functionally, catalyzes the formation of S-adenosylmethionine (AdoMet) from methionine and ATP. The overall synthetic reaction is composed of two sequential steps, AdoMet formation and the subsequent tripolyphosphate hydrolysis which occurs prior to release of AdoMet from the enzyme. The sequence is that of S-adenosylmethionine synthase from Myxococcus xanthus (strain DK1622).